Reading from the N-terminus, the 161-residue chain is Putative pre-16S rRNA nuclease (161 aa).

The protein belongs to the YqgF nuclease family.

It is found in the cytoplasm. Could be a nuclease involved in processing of the 5'-end of pre-16S rRNA. In Bradyrhizobium sp. (strain ORS 278), this protein is Putative pre-16S rRNA nuclease.